Consider the following 391-residue polypeptide: Aspartate carbamoyltransferase 3, chloroplastic (391 aa).

The N-terminal 69 residues, 1–69 (MTASSSLFSC…SKCDKMIKTR (69 aa)), are a transit peptide targeting the chloroplast. Residues R137 and T138 each contribute to the carbamoyl phosphate site. Residues R137 and T138 each contribute to the UMP site. L-aspartate is bound at residue K167. Carbamoyl phosphate is bound by residues R188, H216, and Q219. 2 residues coordinate UMP: R188 and H216. Residues R249 and R311 each contribute to the UMP site. L-aspartate contacts are provided by R249 and R311. Carbamoyl phosphate is bound by residues L351 and P352.

It belongs to the aspartate/ornithine carbamoyltransferase superfamily. ATCase family. As to quaternary structure, homotrimer.

It is found in the plastid. The protein resides in the chloroplast. It carries out the reaction carbamoyl phosphate + L-aspartate = N-carbamoyl-L-aspartate + phosphate + H(+). It participates in pyrimidine metabolism; UMP biosynthesis via de novo pathway; (S)-dihydroorotate from bicarbonate: step 2/3. With respect to regulation, feedback inhibited by UMP. Functionally, catalyzes the condensation of carbamoyl phosphate and aspartate to form carbamoyl aspartate and inorganic phosphate, the committed step in the de novo pyrimidine nucleotide biosynthesis pathway. In Pisum sativum (Garden pea), this protein is Aspartate carbamoyltransferase 3, chloroplastic (PYRB3).